We begin with the raw amino-acid sequence, 165 residues long: Sporulation-specific cell division protein SsgB (165 aa).

Residues 1–21 (MLVGNSWTRSLEPVSGHEHTE) form a disordered region.

This sequence belongs to the SsgA family. As to quaternary structure, interacts with SsgA. Interacts with FtsZ (via N-terminus).

It localises to the cell septum. Its function is as follows. Involved in sporulation-specific cell division. Required for early stages of sporulation. Important in the process of growth cessation prior to sporulation-specific cell division. Recruits cell division protein FtsZ to the future septum sites and tethers the contractile ring structure (Z ring) to the cytoplasmic membrane during sporulation. Stimulates polymerization and filament length of FtsZ in vitro. The sequence is that of Sporulation-specific cell division protein SsgB from Kineococcus radiotolerans (strain ATCC BAA-149 / DSM 14245 / SRS30216).